Consider the following 347-residue polypeptide: NADH-quinone oxidoreductase subunit H (347 aa).

9 helical membrane passes run 13-33 (IIMI…IAYV), 50-70 (PNVV…KFVF), 82-102 (AVFL…WAVV), 115-135 (VGIL…IMGG), 161-181 (IGFV…TDIV), 198-218 (FLDW…ISAL), 263-283 (CALT…IWIL), 286-306 (VPGI…FAMV), and 321-341 (LGWK…AFVL).

This sequence belongs to the complex I subunit 1 family. As to quaternary structure, NDH-1 is composed of 14 different subunits. Subunits NuoA, H, J, K, L, M, N constitute the membrane sector of the complex.

Its subcellular location is the cell inner membrane. It carries out the reaction a quinone + NADH + 5 H(+)(in) = a quinol + NAD(+) + 4 H(+)(out). NDH-1 shuttles electrons from NADH, via FMN and iron-sulfur (Fe-S) centers, to quinones in the respiratory chain. The immediate electron acceptor for the enzyme in this species is believed to be ubiquinone. Couples the redox reaction to proton translocation (for every two electrons transferred, four hydrogen ions are translocated across the cytoplasmic membrane), and thus conserves the redox energy in a proton gradient. This subunit may bind ubiquinone. The polypeptide is NADH-quinone oxidoreductase subunit H (Rhizobium johnstonii (strain DSM 114642 / LMG 32736 / 3841) (Rhizobium leguminosarum bv. viciae)).